The chain runs to 77 residues: Acyl carrier protein (77 aa).

The Carrier domain maps to 2–77 (ADALERVTKI…DAVNYINSKQ (76 aa)). Ser-37 bears the O-(pantetheine 4'-phosphoryl)serine mark.

It belongs to the acyl carrier protein (ACP) family. Post-translationally, 4'-phosphopantetheine is transferred from CoA to a specific serine of apo-ACP by AcpS. This modification is essential for activity because fatty acids are bound in thioester linkage to the sulfhydryl of the prosthetic group.

The protein localises to the cytoplasm. Its pathway is lipid metabolism; fatty acid biosynthesis. In terms of biological role, carrier of the growing fatty acid chain in fatty acid biosynthesis. In Bacillus licheniformis (strain ATCC 14580 / DSM 13 / JCM 2505 / CCUG 7422 / NBRC 12200 / NCIMB 9375 / NCTC 10341 / NRRL NRS-1264 / Gibson 46), this protein is Acyl carrier protein.